A 393-amino-acid chain; its full sequence is Ethanol acetyltransferase 1 (393 aa).

The N-terminal 25 residues, 1–25, are a transit peptide targeting the mitochondrion; that stretch reads MHFTRTLFNQVASKASRQLPVQKRV. The region spanning 49–151 is the AB hydrolase-1 domain; that stretch reads PIVFVHGIFG…GVIIDNSPIE (103 aa). Residues Ser-122, Asp-146, and His-296 each act as charge relay system in the active site. Basic and acidic residues predominate over residues 343–354; the sequence is AKHAQQIEELRK. The interval 343-393 is disordered; that stretch reads AKHAQQIEELRKVTSTSESSIPHSTQSSEQAFTENIDLARQEREHQKSVSA. Residues 355–375 show a composition bias toward polar residues; it reads VTSTSESSIPHSTQSSEQAFT. Basic and acidic residues predominate over residues 379–393; the sequence is DLARQEREHQKSVSA.

Belongs to the AB hydrolase superfamily.

The protein resides in the mitochondrion. The enzyme catalyses ethanol + acetyl-CoA = ethyl acetate + CoA. The catalysed reaction is acetyl-CoA + H2O = acetate + CoA + H(+). It carries out the reaction ethyl acetate + H2O = ethanol + acetate + H(+). In terms of biological role, alcohol acetyltransferase that catalyzes the synthesis of ethyl acetate from ethanol and acetyl-CoA. Can also function as a thioesterase by hydrolyzing acetyl-CoA in the absence of ethanol, as well as esterase hydrolyzing ethyl acetate. The protein is Ethanol acetyltransferase 1 (EAT1) of Wickerhamomyces ciferrii (strain ATCC 14091 / BCRC 22168 / CBS 111 / JCM 3599 / NBRC 0793 / NRRL Y-1031 F-60-10) (Yeast).